The sequence spans 504 residues: Anaerobic nitric oxide reductase transcription regulator NorR (504 aa).

Asp57 bears the 4-aspartylphosphate mark. A Sigma-54 factor interaction domain is found at 187–416; sequence MIGLSPGMTQ…LEHAIHRAVV (230 aa). Residues 215 to 222 and 278 to 287 contribute to the ATP site; these read GETGTGKE and ADNGTLFLDE. A DNA-binding region (H-T-H motif) is located at residues 479–498; the sequence is WAACARMLETDVANLHRLAK.

Its pathway is nitrogen metabolism; nitric oxide reduction. Its function is as follows. Required for the expression of anaerobic nitric oxide (NO) reductase, acts as a transcriptional activator for at least the norVW operon. Activation also requires sigma-54. This chain is Anaerobic nitric oxide reductase transcription regulator NorR, found in Shigella flexneri serotype 5b (strain 8401).